An 834-amino-acid polypeptide reads, in one-letter code: Taste receptor type 1 member 2 (834 aa).

The first 19 residues, 1–19 (MGPRARTVCFLFFLLWVLA), serve as a signal peptide directing secretion. At 20-561 (ELAENSDFHL…SFLEWHEAAT (542 aa)) the chain is on the extracellular side. 7 N-linked (GlcNAc...) asparagine glycosylation sites follow: Asn-84, Asn-292, Asn-312, Asn-363, Asn-423, Asn-482, and Asn-522. A helical membrane pass occupies residues 562 to 582 (IAVALLAALGFLXXXXXXXXX). Residues 583-597 (XXXXXXPMVRSAGGP) are Cytoplasmic-facing. The chain crosses the membrane as a helical span at residues 598–618 (MCFLMLTLLLVAYMVVPVYVG). Residues 619-630 (PPKVTTCLCRQA) lie on the Extracellular side of the membrane. The helical transmembrane segment at 631–651 (LFPVCFTICISCITMRSFQIV) threads the bilayer. The Cytoplasmic segment spans residues 652-676 (CVFKMASRFPRAYSYWVRYQGSYVS). The helical transmembrane segment at 677-697 (VAFITALKVVTVVISLLATGL) threads the bilayer. Residues 698 to 722 (NPTTRADTDDPKIMIISCNPNYRNS) lie on the Extracellular side of the membrane. Residues 723 to 743 (LLFNTSLDLLLSVVGFSFAYM) form a helical membrane-spanning segment. Residues 744–755 (GKELPTNYNEAK) lie on the Cytoplasmic side of the membrane. A helical transmembrane segment spans residues 756–776 (FITFSMTFYFTSSVSLCTFMS). The Extracellular segment spans residues 777–779 (VYD). A helical membrane pass occupies residues 780 to 800 (GVLVTIVDLLVTVFNLLAISL). Residues 801–834 (GYFGPKCYMILFYPERNTPAYFNSMIQGYTMRRD) lie on the Cytoplasmic side of the membrane.

This sequence belongs to the G-protein coupled receptor 3 family. TAS1R subfamily. In terms of assembly, forms heterodimers with TAS1R3.

Its subcellular location is the cell membrane. Functionally, putative taste receptor. TAS1R2/TAS1R3 recognizes diverse natural and synthetic sweeteners. The chain is Taste receptor type 1 member 2 (TAS1R2) from Cebuella pygmaea (Pygmy marmoset).